The primary structure comprises 486 residues: Bile acid receptor (486 aa).

Residue Lys132 forms a Glycyl lysine isopeptide (Lys-Gly) (interchain with G-Cter in SUMO1) linkage. The nuclear receptor DNA-binding region spans 134-209 (DELCVVCGDR…MGMLAECMYT (76 aa)). Residues 137 to 157 (CVVCGDRASGYHYNALTCEGC) form an NR C4-type zinc finger. 2 positions are modified to phosphoserine; by PKC/PRKCA: Ser145 and Ser164. Lys167 is subject to N6-acetyllysine; by EP300. The NR C4-type zinc-finger motif lies at 173–197 (CKNGGNCVMDMYMRRKCQECRLRKC). Lys220 is modified (N6-methyllysine; by SETD7). N6-acetyllysine; by EP300 is present on Lys227. Positions 262–486 (DQQTLLHFIM…PLLCEIWDVQ (225 aa)) constitute an NR LBD domain. Residue Lys289 forms a Glycyl lysine isopeptide (Lys-Gly) (interchain with G-Cter in SUMO1) linkage. Residues Arg345, Tyr375, and Tyr383 each coordinate chenodeoxycholate. Position 456 is a phosphothreonine; by PKC/PRKCZ (Thr456). His461 provides a ligand contact to chenodeoxycholate.

This sequence belongs to the nuclear hormone receptor family. NR1 subfamily. In terms of assembly, heterodimer (via C-terminus) with RXRA (via DBD); the heterodimerization enhances the binding affinity for LXXLL motifs from coactivators. Binds DNA predominantly as a heterodimer with RXRA. After activation by agonist binding interacts with coactivators. Interacts with NCOA1, NCOA2, PPARGC1A, CARM1, SETD7, PRMT1, GPS2, SMARCA4 and MED1. Interacts with EP300 and SMARCD1. Interacts with XRCC5 and XRCC6; decreasing NR1H4/FXR transactivation activity towards ABCB11/BSEP. Interacts with PAGR1 and NCOA6; indicative for an association with an MLL2/MLL3 complex (ASCOM). Post-translationally, acetylated by EP300. Lys-227 as is the major acetylation site for EP300; the dynamicly regulated acetylation inhibits heterodimerization with RXRA and transactivation activity. Deacetylated by SIRT1. In terms of processing, methylation may increase transactivation of target genes. Phosphorylation by PKC/PRKCA increases transactivation activity by promoting association with PPARGC1A. Post-translationally, sumoylated upon ligand binding. In terms of tissue distribution, liver and hepatocyte-related cells express mainly FXRalpha1-type isoforms with isoform 3 and isoform 4 in approximately equal proportions. In intestine and kidney mainly FXRalpha2-type isoforms are expressed with isoform 1 and isoform 2 in approximately equal proportions. Expressed in pancreatic beta cells and macrophages.

The protein localises to the nucleus. In terms of biological role, ligand-activated transcription factor. Receptor for bile acids (BAs) such as chenodeoxycholic acid (CDCA), lithocholic acid, deoxycholic acid (DCA) and allocholic acid (ACA). Plays a essential role in BA homeostasis through the regulation of genes involved in BA synthesis, conjugation and enterohepatic circulation. Also regulates lipid and glucose homeostasis and is involved innate immune response. The FXR-RXR heterodimer binds predominantly to farnesoid X receptor response elements (FXREs) containing two inverted repeats of the consensus sequence 5'-AGGTCA-3' in which the monomers are spaced by 1 nucleotide (IR-1) but also to tandem repeat DR1 sites with lower affinity, and can be activated by either FXR or RXR-specific ligands. It is proposed that monomeric nuclear receptors such as NR5A2/LRH-1 bound to coregulatory nuclear responsive element (NRE) halfsites located in close proximity to FXREs modulate transcriptional activity. In the liver activates transcription of the corepressor NR0B2 thereby indirectly inhibiting CYP7A1 and CYP8B1 (involved in BA synthesis) implicating at least in part histone demethylase KDM1A resulting in epigenomic repression, and SLC10A1/NTCP (involved in hepatic uptake of conjugated BAs). Activates transcription of the repressor MAFG (involved in regulation of BA synthesis). Activates transcription of SLC27A5/BACS and BAAT (involved in BA conjugation), ABCB11/BSEP (involved in bile salt export) by directly recruiting histone methyltransferase CARM1, and ABCC2/MRP2 (involved in secretion of conjugated BAs) and ABCB4 (involved in secretion of phosphatidylcholine in the small intestine). Activates transcription of SLC27A5/BACS and BAAT (involved in BA conjugation), ABCB11/BSEP (involved in bile salt export) by directly recruiting histone methyltransferase CARM1, and ABCC2/MRP2 (involved in secretion of conjugated BAs) and ABCB4 (involved in secretion of phosphatidylcholine in the small intestine). In the intestine activates FGF19 expression and secretion leading to hepatic CYP7A1 repression. The function also involves the coordinated induction of hepatic KLB/beta-klotho expression. Regulates transcription of liver UGT2B4 and SULT2A1 involved in BA detoxification; binding to the UGT2B4 promoter seems to imply a monomeric transactivation independent of RXRA. Modulates lipid homeostasis by activating liver NR0B2/SHP-mediated repression of SREBF1 (involved in de novo lipogenesis), expression of PLTP (involved in HDL formation), SCARB1 (involved in HDL hepatic uptake), APOE, APOC1, APOC4, PPARA (involved in beta-oxidation of fatty acids), VLDLR and SDC1 (involved in the hepatic uptake of LDL and IDL remnants), and inhibiting expression of MTTP (involved in VLDL assembly. Increases expression of APOC2 (promoting lipoprotein lipase activity implicated in triglyceride clearance). Transrepresses APOA1 involving a monomeric competition with NR2A1 for binding to a DR1 element. Also reduces triglyceride clearance by inhibiting expression of ANGPTL3 and APOC3 (both involved in inhibition of lipoprotein lipase). Involved in glucose homeostasis by modulating hepatic gluconeogenesis through activation of NR0B2/SHP-mediated repression of respective genes. Modulates glycogen synthesis (inducing phosphorylation of glycogen synthase kinase-3). Modulates glucose-stimulated insulin secretion and is involved in insulin resistance. Involved in intestinal innate immunity. Plays a role in protecting the distal small intestine against bacterial overgrowth and preservation of the epithelial barrier. Down-regulates inflammatory cytokine expression in several types of immune cells including macrophages and mononuclear cells. Mediates trans-repression of TLR4-induced cytokine expression; the function seems to require its sumoylation and prevents N-CoR nuclear receptor corepressor clearance from target genes such as IL1B and NOS2. Involved in the TLR9-mediated protective mechanism in intestinal inflammation. Plays an anti-inflammatory role in liver inflammation; proposed to inhibit pro-inflammatory (but not antiapoptotic) NF-kappa-B signaling). Its function is as follows. Promotes transcriptional activation of target genes NR0B2/SHP (inducible by unconjugated CDCA), SLC51B/OSTB (inducible by unconjugated CDCA and DCA) and FABP6/IBAP; low activity for ABCB11/BSEP (inducible by unconjugated CDCA, DCA and ACA); not inducible by taurine- and glycine-amidated CDCA. Promotes transcriptional activation of target genes ABCB11/BSEP (inducible by unconjugated CDCA, DCA and ACA), NR0B2/SHP (inducible by unconjugated CDCA DCA and ACA), SLC51B/OSTB (inducible by unconjugated CDCA and DCA) and FABP6/IBAP; not inducible by taurine- and glycine-amidated CDCA. Functionally, promotes transcriptional activation of target genes NR0B2/SHP (inducible by unconjugated CDCA), SLC51B/OSTB (inducible by unconjugated CDCA and DCA) and IBAP; low activity for ABCB11/BSEP (inducible by unconjugated CDCA, DCA and ACA); not inducible by taurine- and glycine-amidated CDCA. In terms of biological role, promotes transcriptional activation of target genes ABCB11/BSEP (inducible by unconjugated CDCA, ACA and DCA), NR0B2/SHP (inducible by unconjugated CDCA, ACA and DCA), SLC51B/OSTB (inducible by unconjugated CDCA and DCA) and FABP6/IBAP; most efficient isoform compared to isoforms 1 to 3; not inducible by taurine- and glycine-amidated CDCA. The chain is Bile acid receptor (NR1H4) from Homo sapiens (Human).